The following is a 382-amino-acid chain: uncharacterized protein (382 aa).

11 consecutive transmembrane segments (helical) span residues 8–28, 45–65, 75–95, 102–122, 131–151, 157–177, 204–224, 231–251, 274–294, 325–345, and 349–369; these read VMLL…LNTL, MVSS…GYLI, YLAS…VGFW, FIAG…LMCS, LLAA…LLVS, LLHV…PLLF, LGVN…GLMP, GMAN…GILG, VVIL…ALFI, ALLL…AMLM, and SDNL…LMLL.

This sequence belongs to the major facilitator superfamily. YcaD (TC 2.A.1.26) family.

It localises to the cell inner membrane. This is an uncharacterized protein from Salmonella gallinarum (strain 287/91 / NCTC 13346).